Here is a 270-residue protein sequence, read N- to C-terminus: 2-heptyl-3-hydroxy-4-quinolone dioxygenase AqdC2 (270 aa).

Residues 25–156 form the AB hydrolase-1 domain; sequence PALVLLTGWG…KSARAGLAKS (132 aa). His99 lines the substrate pocket. The Proton donor/acceptor role is filled by His248.

Belongs to the AB hydrolase superfamily.

It carries out the reaction 2-heptyl-3-hydroxy-4(1H)-quinolone + O2 = N-octanoylanthranilate + CO + H(+). Its function is as follows. Involved in the degradation of the Pseudomonas aeruginosa quorum sensing signal molecules HHQ (2-heptyl-4-quinolone) and PQS (2-heptyl-3-hydroxy-4-quinolone) to anthranilic acid. Catalyzes the cleavage of PQS to form N-octanoylanthranilic acid and carbon monoxide. This is 2-heptyl-3-hydroxy-4-quinolone dioxygenase AqdC2 from Rhodococcus erythropolis (Arthrobacter picolinophilus).